Here is a 210-residue protein sequence, read N- to C-terminus: Claudin-4 (210 aa).

At 1–7 (MASMGLQ) the chain is on the cytoplasmic side. Positions 1-103 (MASMGLQVMG…GVLLSVVGGK (103 aa)) are interaction with EPHA2. The helical transmembrane segment at 8–28 (VMGIALAVLGWLGAILSCALP) threads the bilayer. The Extracellular portion of the chain corresponds to 29–81 (MWRVTAFIGSNIVTSQTIWEGLWMNCVVQSTGQMQCKVYDSLLALPQDLQAAR). Residues Cys-54 and Cys-64 are joined by a disulfide bond. The chain crosses the membrane as a helical span at residues 82–102 (ALMVVSIILAALGVLLSVVGG). At 103-117 (KCTNCVEDESAKAKT) the chain is on the cytoplasmic side. The chain crosses the membrane as a helical span at residues 118 to 138 (MIVAGVVFLLAGLLVMVPASW). The Extracellular segment spans residues 139–160 (TANNIIRDFYNPLVVSGQKREM). Residues 161–181 (GASLYVGWAASGLLLLGGALL) traverse the membrane as a helical segment. Residues 182-210 (CCNCPPRADKPYSAKYSAAARSAPASNYV) lie on the Cytoplasmic side of the membrane. Residue Tyr-209 is modified to Phosphotyrosine. The segment at 209 to 210 (YV) is interactions with TJP1, TJP2 and TJP3.

This sequence belongs to the claudin family. Can form heteropolymeric strands with other claudins. Interacts with CLDN8. Interacts with CLDN1. Directly interacts with TJP1/ZO-1. Interacts with TJP2/ZO-2 and TJP3/ZO-3. Interacts with EPHA2; phosphorylates CLDN4 and may regulate tight junctions. In terms of processing, phosphorylated. Phosphorylation by EPHA2 is stimulated by EFNA1 and alters interaction with TJP1.

The protein resides in the cell junction. It is found in the tight junction. It localises to the cell membrane. The enzyme catalyses chloride(in) = chloride(out). It carries out the reaction bromide(in) = bromide(out). It catalyses the reaction iodide(out) = iodide(in). The catalysed reaction is fluoride(in) = fluoride(out). In terms of biological role, can associate with other claudins to regulate tight junction structural and functional strand dynamics. May coassemble with CLDN8 into tight junction strands containing anion-selective channels that convey paracellular chloride permeability in renal collecting ducts. May integrate into CLDN3 strands to modulate localized tight junction barrier properties. May disrupt strand assembly of channel-forming CLDN2 and CLDN15 and inhibit cation conductance. Cannot form tight junction strands on its own. This chain is Claudin-4 (CLDN4), found in Canis lupus familiaris (Dog).